We begin with the raw amino-acid sequence, 178 residues long: GTP-dependent dephospho-CoA kinase (178 aa).

The GTP site is built by aspartate 43, isoleucine 44, valine 45, aspartate 62, lysine 64, and glutamate 120.

Belongs to the GTP-dependent DPCK family.

It carries out the reaction 3'-dephospho-CoA + GTP = GDP + CoA + H(+). It functions in the pathway cofactor biosynthesis; coenzyme A biosynthesis. Its function is as follows. Catalyzes the GTP-dependent phosphorylation of the 3'-hydroxyl group of dephosphocoenzyme A to form coenzyme A (CoA). The sequence is that of GTP-dependent dephospho-CoA kinase from Natronomonas pharaonis (strain ATCC 35678 / DSM 2160 / CIP 103997 / JCM 8858 / NBRC 14720 / NCIMB 2260 / Gabara) (Halobacterium pharaonis).